Here is a 529-residue protein sequence, read N- to C-terminus: Meiosis 1 arrest protein (529 aa).

Disordered regions lie at residues 180 to 201 (KGIQ…DESS) and 504 to 529 (AASK…PSHT). The segment covering 188-200 (SPSPTEEPSNDES) has biased composition (polar residues). Residue S516 is modified to Phosphoserine.

Expressed in germ cells of the testis. Expressed from spermatogonia to spermatids. Expressed at very low levels in lung, stomach, thymus. Not detected in Sertoli cells.

It localises to the cytoplasm. Required for meiosis I progression during spermatogenesis. In Mus musculus (Mouse), this protein is Meiosis 1 arrest protein (M1ap).